A 56-amino-acid polypeptide reads, in one-letter code: Large ribosomal subunit protein bL33 (56 aa).

This sequence belongs to the bacterial ribosomal protein bL33 family.

The protein is Large ribosomal subunit protein bL33 of Aliarcobacter butzleri (strain RM4018) (Arcobacter butzleri).